The chain runs to 182 residues: Ribulose bisphosphate carboxylase small subunit, chloroplastic (182 aa).

A chloroplast-targeting transit peptide spans 1 to 58 (MASSMISSATIATVNCSSPAQANMVAPFTGLKSASAFPVTRKANNDITSLASNGGRVQ).

This sequence belongs to the RuBisCO small chain family. In terms of assembly, heterohexadecamer of 8 large and 8 small subunits.

Its subcellular location is the plastid. The protein resides in the chloroplast. Its function is as follows. RuBisCO catalyzes two reactions: the carboxylation of D-ribulose 1,5-bisphosphate, the primary event in carbon dioxide fixation, as well as the oxidative fragmentation of the pentose substrate. Both reactions occur simultaneously and in competition at the same active site. Although the small subunit is not catalytic it is essential for maximal activity. The chain is Ribulose bisphosphate carboxylase small subunit, chloroplastic from Gossypium hirsutum (Upland cotton).